A 923-amino-acid polypeptide reads, in one-letter code: Neuropilin-1 (923 aa).

Positions 1 to 21 are cleaved as a signal peptide; the sequence is MERGLPLLCAVLALVLAPAGA. Topologically, residues 22 to 856 are extracellular; that stretch reads FRNDKCGDTI…PGNVLKTLDP (835 aa). 3 disulfide bridges follow: C27/C54, C82/C104, and C147/C173. CUB domains lie at 27–141 and 147–265; these read CGDT…YEIF and CSQN…YSVL. The N-linked (GlcNAc...) asparagine glycan is linked to N150. Ca(2+) contacts are provided by E195, D209, and D250. A disulfide bridge connects residues C206 and C228. Residues N261, N300, and N522 are each glycosylated (N-linked (GlcNAc...) asparagine). Cystine bridges form between C275-C424 and C431-C583. F5/8 type C domains are found at residues 275–424 and 431–583; these read CMEA…VYGC and CSGM…LLGC. The O-linked (Xyl...) (chondroitin sulfate) serine; alternate glycan is linked to S612. An O-linked (Xyl...) (heparan sulfate) serine; alternate glycan is attached at S612. The region spanning 645-811 is the MAM domain; that stretch reads TYGFNCEFGW…NHISQEDCAK (167 aa). Positions 820-845 are disordered; that stretch reads PEIKIDETGSTPGYEGEGEGDKNISR. S829 carries an O-linked (Xyl...) (chondroitin sulfate) serine glycan. N842 carries an N-linked (GlcNAc...) asparagine glycan. Residues 857–879 traverse the membrane as a helical segment; the sequence is ILITIIAMSALGVLLGAVCGVVL. The Cytoplasmic segment spans residues 880-923; that stretch reads YCACWHNGMSERNLSALENYNFELVDGVKLKKDKLNTQSTYSEA. S894 is modified (phosphoserine).

The protein belongs to the neuropilin family. In terms of assembly, homodimer, and heterodimer with NRP2. Interacts with FER. Interacts with PLXNB1. Interacts with VEGFA. Interacts with ABCB8/MITOSUR in mitochondria. As to quaternary structure, (Microbial infection) Interacts with SARS coronavirus-2/SARS-CoV-2 spike protein S1 (via the CendR motif RRAR). The expression of isoforms 1 and 2 does not seem to overlap. Expressed in olfactory epithelium (at protein level). Expressed in fibroblasts (at protein level). Expressed by the blood vessels of different tissues. In the developing embryo it is found predominantly in the nervous system. In adult tissues, it is highly expressed in heart and placenta; moderately in lung, liver, skeletal muscle, kidney and pancreas; and low in adult brain. Expressed in the central nervous system, including olfactory related regions such as the olfactory tubercles and paraolfactory gyri. In terms of tissue distribution, the expression of isoforms 1 and 2 does not seem to overlap. Found in liver hepatocytes, kidney distal and proximal tubules.

The protein resides in the secreted. The protein localises to the mitochondrion membrane. It localises to the cell membrane. It is found in the cytoplasm. Its function is as follows. Cell-surface receptor involved in the development of the cardiovascular system, in angiogenesis, in the formation of certain neuronal circuits and in organogenesis outside the nervous system. Mediates the chemorepulsant activity of semaphorins. Recognizes a C-end rule (CendR) motif R/KXXR/K on its ligands which causes cellular internalization and vascular leakage. It binds to semaphorin 3A, the PLGF-2 isoform of PGF, the VEGF165 isoform of VEGFA and VEGFB. Coexpression with KDR results in increased VEGF165 binding to KDR as well as increased chemotaxis. Regulates VEGF-induced angiogenesis. Binding to VEGFA initiates a signaling pathway needed for motor neuron axon guidance and cell body migration, including for the caudal migration of facial motor neurons from rhombomere 4 to rhombomere 6 during embryonic development. Regulates mitochondrial iron transport via interaction with ABCB8/MITOSUR. In terms of biological role, (Microbial infection) Acts as a host factor for human coronavirus SARS-CoV-2 infection. Recognizes and binds to CendR motif RRAR on SARS-CoV-2 spike protein S1 which enhances SARS-CoV-2 infection. Functionally, binds VEGF-165 and may inhibit its binding to cells. May induce apoptosis by sequestering VEGF-165. May bind as well various members of the semaphorin family. Its expression has an averse effect on blood vessel number and integrity. This chain is Neuropilin-1, found in Homo sapiens (Human).